Consider the following 279-residue polypeptide: Thymidylate synthase (279 aa).

A dUMP-binding site is contributed by 141–142; sequence RR. Cys161 (nucleophile) is an active-site residue. Residues 181–184, Asn192, and 222–224 contribute to the dUMP site; these read RSND and HIY. Asp184 provides a ligand contact to (6R)-5,10-methylene-5,6,7,8-tetrahydrofolate. Ala278 contacts (6R)-5,10-methylene-5,6,7,8-tetrahydrofolate.

This sequence belongs to the thymidylate synthase family. Bacterial-type ThyA subfamily. As to quaternary structure, homodimer.

The protein localises to the cytoplasm. It carries out the reaction dUMP + (6R)-5,10-methylene-5,6,7,8-tetrahydrofolate = 7,8-dihydrofolate + dTMP. It participates in pyrimidine metabolism; dTTP biosynthesis. Functionally, catalyzes the reductive methylation of 2'-deoxyuridine-5'-monophosphate (dUMP) to 2'-deoxythymidine-5'-monophosphate (dTMP) while utilizing 5,10-methylenetetrahydrofolate (mTHF) as the methyl donor and reductant in the reaction, yielding dihydrofolate (DHF) as a by-product. This enzymatic reaction provides an intracellular de novo source of dTMP, an essential precursor for DNA biosynthesis. This Bacillus licheniformis (strain ATCC 14580 / DSM 13 / JCM 2505 / CCUG 7422 / NBRC 12200 / NCIMB 9375 / NCTC 10341 / NRRL NRS-1264 / Gibson 46) protein is Thymidylate synthase.